The chain runs to 83 residues: Small integral membrane protein 22 (83 aa).

A helical membrane pass occupies residues 32–52; the sequence is VAFIVFLTFMGTVLLLLLLVV. The interval 60-83 is disordered; the sequence is SPGPRRESPRKERPKGVDNLALEP. Basic and acidic residues predominate over residues 63–75; it reads PRRESPRKERPKG.

Interacts with CANX and DDOST. Interacts with SQLE; this interaction modulates lipid droplet formation.

The protein resides in the membrane. The protein localises to the late endosome. In terms of biological role, may modulate lipid droplet formation throught interaction with SQLE. This Homo sapiens (Human) protein is Small integral membrane protein 22.